The chain runs to 350 residues: Small ribosomal subunit biogenesis GTPase RsgA (350 aa).

Residues 1–17 show a composition bias toward polar residues; that stretch reads MSKNKLSKGQQRRVQAN. The segment at 1–35 is disordered; that stretch reads MSKNKLSKGQQRRVQANHQRRLRTDRKPELDDSQL. Residues 103-273 enclose the CP-type G domain; the sequence is TSVLTRPDLY…VIDSPGVREF (171 aa). Residues 159 to 162 and 213 to 221 each bind GTP; these read NKID and GQSGVGKSS. Zn(2+) is bound by residues cysteine 297, cysteine 302, histidine 304, and cysteine 310.

This sequence belongs to the TRAFAC class YlqF/YawG GTPase family. RsgA subfamily. As to quaternary structure, monomer. Associates with 30S ribosomal subunit, binds 16S rRNA. Zn(2+) serves as cofactor.

Its subcellular location is the cytoplasm. Its function is as follows. One of several proteins that assist in the late maturation steps of the functional core of the 30S ribosomal subunit. Helps release RbfA from mature subunits. May play a role in the assembly of ribosomal proteins into the subunit. Circularly permuted GTPase that catalyzes slow GTP hydrolysis, GTPase activity is stimulated by the 30S ribosomal subunit. This is Small ribosomal subunit biogenesis GTPase RsgA from Yersinia pseudotuberculosis serotype O:1b (strain IP 31758).